We begin with the raw amino-acid sequence, 201 residues long: Large ribosomal subunit protein uL4 (201 aa).

Residues 51-73 (EVTGSGKKPWRQKGTGRARAGSV) form a disordered region.

Belongs to the universal ribosomal protein uL4 family. In terms of assembly, part of the 50S ribosomal subunit.

In terms of biological role, one of the primary rRNA binding proteins, this protein initially binds near the 5'-end of the 23S rRNA. It is important during the early stages of 50S assembly. It makes multiple contacts with different domains of the 23S rRNA in the assembled 50S subunit and ribosome. Its function is as follows. Forms part of the polypeptide exit tunnel. The chain is Large ribosomal subunit protein uL4 from Erwinia tasmaniensis (strain DSM 17950 / CFBP 7177 / CIP 109463 / NCPPB 4357 / Et1/99).